We begin with the raw amino-acid sequence, 126 residues long: MEKDLKFTASHEWVRDNGDGTVTVGISDHAQGLLGDVVFVDLPDVDDEVTAGEGFSLVESVKAASDIYSPVTGVIVEINEELEDSPEQVNEEPYESGWIARIKLSDSSELESLIPSDTYLESLDEE.

Positions 21-103 (TVTVGISDHA…YESGWIARIK (83 aa)) constitute a Lipoyl-binding domain. Lys62 carries the N6-lipoyllysine modification.

This sequence belongs to the GcvH family. In terms of assembly, the glycine cleavage system is composed of four proteins: P, T, L and H. It depends on (R)-lipoate as a cofactor.

In terms of biological role, the glycine cleavage system catalyzes the degradation of glycine. The H protein shuttles the methylamine group of glycine from the P protein to the T protein. In Aliivibrio fischeri (strain MJ11) (Vibrio fischeri), this protein is Glycine cleavage system H protein.